Consider the following 389-residue polypeptide: Cellobiose 2-epimerase (389 aa).

Belongs to the cellobiose 2-epimerase family.

It carries out the reaction D-cellobiose = beta-D-glucosyl-(1-&gt;4)-D-mannopyranose. Its function is as follows. Catalyzes the reversible epimerization of cellobiose to 4-O-beta-D-glucopyranosyl-D-mannose (Glc-Man). The protein is Cellobiose 2-epimerase of Ruminococcus albus (strain ATCC 27210 / DSM 20455 / JCM 14654 / NCDO 2250 / 7).